The chain runs to 383 residues: Serine protease 23 (383 aa).

A signal peptide spans 1-19 (MAGIPGLLFLLFFLLCAVG). An N-linked (GlcNAc...) asparagine glycan is attached at asparagine 93. Position 109 is a phosphoserine; by FAM20C (serine 109). Cysteine 160 and cysteine 176 are joined by a disulfide. Catalysis depends on histidine 175, which acts as the Charge relay system. N-linked (GlcNAc...) asparagine glycosylation occurs at asparagine 207. Catalysis depends on charge relay system residues aspartate 240 and serine 316.

The protein belongs to the peptidase S1 family.

It localises to the secreted. This chain is Serine protease 23 (PRSS23), found in Homo sapiens (Human).